Here is a 138-residue protein sequence, read N- to C-terminus: Ribulose bisphosphate carboxylase small subunit (138 aa).

The protein belongs to the RuBisCO small chain family. In terms of assembly, heterohexadecamer of 8 large and 8 small subunits.

Its subcellular location is the plastid. The protein localises to the chloroplast. RuBisCO catalyzes two reactions: the carboxylation of D-ribulose 1,5-bisphosphate, the primary event in carbon dioxide fixation, as well as the oxidative fragmentation of the pentose substrate in the photorespiration process. Both reactions occur simultaneously and in competition at the same active site. Although the small subunit is not catalytic it is essential for maximal activity. This Porphyridium aerugineum (Red microalga) protein is Ribulose bisphosphate carboxylase small subunit.